The primary structure comprises 100 residues: Integration host factor subunit alpha (100 aa).

This sequence belongs to the bacterial histone-like protein family. In terms of assembly, heterodimer of an alpha and a beta chain.

Its function is as follows. This protein is one of the two subunits of integration host factor, a specific DNA-binding protein that functions in genetic recombination as well as in transcriptional and translational control. The chain is Integration host factor subunit alpha from Cereibacter sphaeroides (strain ATCC 17023 / DSM 158 / JCM 6121 / CCUG 31486 / LMG 2827 / NBRC 12203 / NCIMB 8253 / ATH 2.4.1.) (Rhodobacter sphaeroides).